The chain runs to 128 residues: Lutropin subunit beta (128 aa).

The signal sequence occupies residues 1 to 20 (MERLQGLLLWLLLSPSVVWA). Disulfide bonds link Cys29/Cys77, Cys43/Cys92, Cys54/Cys108, Cys58/Cys110, and Cys113/Cys120. An N-linked (GlcNAc...) asparagine glycan is attached at Asn33.

The protein belongs to the glycoprotein hormones subunit beta family. Heterodimer of a common alpha chain and a unique beta chain which confers biological specificity to thyrotropin, lutropin, follitropin and gonadotropin.

It localises to the secreted. In terms of biological role, promotes spermatogenesis and ovulation by stimulating the testes and ovaries to synthesize steroids. The polypeptide is Lutropin subunit beta (LHB) (Phodopus sungorus (Striped hairy-footed hamster)).